The sequence spans 149 residues: D-aminoacyl-tRNA deacylase (149 aa).

The short motif at 137–138 is the Gly-cisPro motif, important for rejection of L-amino acids element; it reads GP.

Belongs to the DTD family. In terms of assembly, homodimer.

The protein resides in the cytoplasm. The enzyme catalyses glycyl-tRNA(Ala) + H2O = tRNA(Ala) + glycine + H(+). It carries out the reaction a D-aminoacyl-tRNA + H2O = a tRNA + a D-alpha-amino acid + H(+). In terms of biological role, an aminoacyl-tRNA editing enzyme that deacylates mischarged D-aminoacyl-tRNAs. Also deacylates mischarged glycyl-tRNA(Ala), protecting cells against glycine mischarging by AlaRS. Acts via tRNA-based rather than protein-based catalysis; rejects L-amino acids rather than detecting D-amino acids in the active site. By recycling D-aminoacyl-tRNA to D-amino acids and free tRNA molecules, this enzyme counteracts the toxicity associated with the formation of D-aminoacyl-tRNA entities in vivo and helps enforce protein L-homochirality. The chain is D-aminoacyl-tRNA deacylase from Geobacter sp. (strain M21).